The following is a 163-amino-acid chain: Urease accessory protein UreE (163 aa).

A disordered region spans residues 144–163 (QPEPGAYGGSSAGSHDGHHH).

The protein belongs to the UreE family.

Its subcellular location is the cytoplasm. In terms of biological role, involved in urease metallocenter assembly. Binds nickel. Probably functions as a nickel donor during metallocenter assembly. This Aliivibrio fischeri (strain MJ11) (Vibrio fischeri) protein is Urease accessory protein UreE.